The sequence spans 171 residues: 3-hydroxydecanoyl-[acyl-carrier-protein] dehydratase (171 aa).

H70 is a catalytic residue.

It belongs to the thioester dehydratase family. FabA subfamily. As to quaternary structure, homodimer.

It localises to the cytoplasm. The catalysed reaction is a (3R)-hydroxyacyl-[ACP] = a (2E)-enoyl-[ACP] + H2O. It catalyses the reaction (3R)-hydroxydecanoyl-[ACP] = (2E)-decenoyl-[ACP] + H2O. It carries out the reaction (2E)-decenoyl-[ACP] = (3Z)-decenoyl-[ACP]. Its pathway is lipid metabolism; fatty acid biosynthesis. Necessary for the introduction of cis unsaturation into fatty acids. Catalyzes the dehydration of (3R)-3-hydroxydecanoyl-ACP to E-(2)-decenoyl-ACP and then its isomerization to Z-(3)-decenoyl-ACP. Can catalyze the dehydratase reaction for beta-hydroxyacyl-ACPs with saturated chain lengths up to 16:0, being most active on intermediate chain length. The polypeptide is 3-hydroxydecanoyl-[acyl-carrier-protein] dehydratase (Azotobacter vinelandii (strain DJ / ATCC BAA-1303)).